A 1052-amino-acid polypeptide reads, in one-letter code: Mitotic checkpoint serine/threonine-protein kinase BUB1 beta (1052 aa).

Residues 56 to 219 enclose the BUB1 N-terminal domain; sequence FESEIRFYSG…LEPSEPQRSS (164 aa). The Nuclear localization signal signature appears at 105–112; it reads GETRYYND. The tract at residues 146–179 is necessary for interaction with KNL1; the sequence is AQFYISWAEEYEARENFKKADIIFQEGIERKAEP. Disordered stretches follow at residues 206 to 256 and 272 to 327; these read EEEA…NAVP and ADTA…TSIP. The D-box signature appears at 217–225; the sequence is RSSLAELKS. Residue Lys243 is modified to N6-acetyllysine; by PCAF. Ser360 is modified (phosphoserine). The interval 361-381 is disordered; sequence TRKPGREEGDPLQRVQSHQQG. Position 428 is a phosphoserine (Ser428). Residues 496 to 552 form a disordered region; sequence SNPREISPAENILQEQPDSKGSSMPFSIFDESLSDKKDKSPATGGPQVLNAQRRPLS. Polar residues predominate over residues 508 to 520; it reads LQEQPDSKGSSMP. 2 positions are modified to phosphoserine: Ser535 and Ser659. Residue Ser665 is modified to Phosphoserine; by PLK1. Ser686 carries the phosphoserine modification. The Protein kinase domain occupies 756 to 1040; that stretch reads VIKQEHLTCD…TISPEALLTQ (285 aa). Position 762 to 770 (762 to 770) interacts with ATP; it reads LTCDDYRLF. Phosphothreonine; by PLK1 is present on Thr781. Lys784 contributes to the ATP binding site. Asp871 acts as the Proton acceptor in catalysis. Thr998 is subject to Phosphothreonine; by PLK1. A phosphoserine mark is found at Ser1033 and Ser1050.

The protein belongs to the protein kinase superfamily. Ser/Thr protein kinase family. BUB1 subfamily. As to quaternary structure, interacts with CENPE. Interacts with PLK1. Part of a complex containing BUB3, CDC20 and BUB1B. Interacts with anaphase-promoting complex/cyclosome (APC/C). Interacts with KNL1. Interacts with KAT2B. Interacts with RIPK3. Interacts with the closed conformation form of MAD2L1. Interacts with CDC20. In terms of processing, proteolytically cleaved by caspase-3 in a cell cycle specific manner. The cleavage might be involved in the durability of the cell cycle delay. Post-translationally, acetylation at Lys-243 regulates its degradation and timing in anaphase entry. Ubiquitinated. Degraded by the proteasome. Ubiquitinated by UBR5, promoting disassembly of the mitotic checkpoint complex from the APC/C complex. In terms of processing, sumoylated with SUMO2 and SUMO3. The sumoylation mediates the association with CENPE at the kinetochore. Post-translationally, autophosphorylated in vitro. Intramolecular autophosphorylation stimulated by CENPE. Phosphorylated during mitosis and hyperphosphorylated in mitotically arrested cells. Phosphorylation at Ser-659 and Ser-1033 occurs at kinetochores upon mitotic entry with dephosphorylation at the onset of anaphase. Proteolytically cleaved by caspase-3 in a cell cycle specific manner. The cleavage might be involved in the durability of the cell cycle delay. Caspase-3 cleavage is associated with abrogation of the mitotic checkpoint. The major site of cleavage is at Asp-603. Highly expressed in thymus followed by spleen.

It localises to the cytoplasm. The protein localises to the nucleus. It is found in the chromosome. Its subcellular location is the centromere. The protein resides in the kinetochore. The catalysed reaction is L-seryl-[protein] + ATP = O-phospho-L-seryl-[protein] + ADP + H(+). It carries out the reaction L-threonyl-[protein] + ATP = O-phospho-L-threonyl-[protein] + ADP + H(+). With respect to regulation, kinase activity stimulated by CENPE. Its function is as follows. Essential component of the mitotic checkpoint. Required for normal mitosis progression and tumor suppression. The mitotic checkpoint delays anaphase until all chromosomes are properly attached to the mitotic spindle. One of its checkpoint functions is to inhibit the activity of the anaphase-promoting complex/cyclosome (APC/C) by blocking the binding of CDC20 to APC/C, independently of its kinase activity. The other is to monitor kinetochore activities that depend on the kinetochore motor CENPE. Required for kinetochore localization of CENPE. Negatively regulates PLK1 activity in interphase cells and suppresses centrosome amplification. Also implicated in triggering apoptosis in polyploid cells that exit aberrantly from mitotic arrest. Essential for tumor suppression. May play a role in regulating aging and fertility. This is Mitotic checkpoint serine/threonine-protein kinase BUB1 beta (Bub1b) from Mus musculus (Mouse).